Reading from the N-terminus, the 867-residue chain is Leucine--tRNA ligase (867 aa).

The 'HIGH' region signature appears at 43–53 (PYPSGRLHMGH). A 'KMSKS' region motif is present at residues 627–631 (KMSKS). Lys630 provides a ligand contact to ATP.

Belongs to the class-I aminoacyl-tRNA synthetase family.

The protein resides in the cytoplasm. It carries out the reaction tRNA(Leu) + L-leucine + ATP = L-leucyl-tRNA(Leu) + AMP + diphosphate. This Phenylobacterium zucineum (strain HLK1) protein is Leucine--tRNA ligase.